The primary structure comprises 97 residues: MSRKCELTGVGVLYGNNVSHSQRKTRRRFEPNLRSIKFRSDITDEVYRLSVNARCIRSVEKAGGFDAYILKANDDILSSAARAIKQKIIHIKAAKSL.

The protein belongs to the bacterial ribosomal protein bL28 family.

The sequence is that of Large ribosomal subunit protein bL28 from Rickettsia prowazekii (strain Madrid E).